The sequence spans 556 residues: Dihydroxy-acid dehydratase (556 aa).

Aspartate 78 contacts Mg(2+). [2Fe-2S] cluster is bound at residue cysteine 119. Residues aspartate 120 and lysine 121 each contribute to the Mg(2+) site. Lysine 121 is subject to N6-carboxylysine. Cysteine 191 serves as a coordination point for [2Fe-2S] cluster. Residue glutamate 442 coordinates Mg(2+). The active-site Proton acceptor is serine 468.

It belongs to the IlvD/Edd family. Homodimer. It depends on [2Fe-2S] cluster as a cofactor. Requires Mg(2+) as cofactor.

It carries out the reaction (2R)-2,3-dihydroxy-3-methylbutanoate = 3-methyl-2-oxobutanoate + H2O. It catalyses the reaction (2R,3R)-2,3-dihydroxy-3-methylpentanoate = (S)-3-methyl-2-oxopentanoate + H2O. It participates in amino-acid biosynthesis; L-isoleucine biosynthesis; L-isoleucine from 2-oxobutanoate: step 3/4. It functions in the pathway amino-acid biosynthesis; L-valine biosynthesis; L-valine from pyruvate: step 3/4. Its function is as follows. Functions in the biosynthesis of branched-chain amino acids. Catalyzes the dehydration of (2R,3R)-2,3-dihydroxy-3-methylpentanoate (2,3-dihydroxy-3-methylvalerate) into 2-oxo-3-methylpentanoate (2-oxo-3-methylvalerate) and of (2R)-2,3-dihydroxy-3-methylbutanoate (2,3-dihydroxyisovalerate) into 2-oxo-3-methylbutanoate (2-oxoisovalerate), the penultimate precursor to L-isoleucine and L-valine, respectively. The protein is Dihydroxy-acid dehydratase of Caldanaerobacter subterraneus subsp. tengcongensis (strain DSM 15242 / JCM 11007 / NBRC 100824 / MB4) (Thermoanaerobacter tengcongensis).